The primary structure comprises 313 residues: Protein-methionine-sulfoxide reductase catalytic subunit MsrP (313 aa).

The tat-type signal signal peptide spans M1–A44. Residues N76, Y79–E80, C134, T169, N217, R222, and G233–K235 each bind Mo-molybdopterin.

It belongs to the MsrP family. As to quaternary structure, heterodimer of a catalytic subunit (MsrP) and a heme-binding subunit (MsrQ). The cofactor is Mo-molybdopterin. Post-translationally, predicted to be exported by the Tat system. The position of the signal peptide cleavage has not been experimentally proven.

It is found in the periplasm. The catalysed reaction is L-methionyl-[protein] + a quinone + H2O = L-methionyl-(S)-S-oxide-[protein] + a quinol. The enzyme catalyses L-methionyl-[protein] + a quinone + H2O = L-methionyl-(R)-S-oxide-[protein] + a quinol. In terms of biological role, part of the MsrPQ system that repairs oxidized periplasmic proteins containing methionine sulfoxide residues (Met-O), using respiratory chain electrons. Thus protects these proteins from oxidative-stress damage caused by reactive species of oxygen and chlorine generated by the host defense mechanisms. MsrPQ is essential for the maintenance of envelope integrity under bleach stress, rescuing a wide series of structurally unrelated periplasmic proteins from methionine oxidation. The catalytic subunit MsrP is non-stereospecific, being able to reduce both (R-) and (S-) diastereoisomers of methionine sulfoxide. This chain is Protein-methionine-sulfoxide reductase catalytic subunit MsrP, found in Anaeromyxobacter dehalogenans (strain 2CP-C).